An 80-amino-acid polypeptide reads, in one-letter code: Defensin-like protein 51 (80 aa).

The N-terminal stretch at 1 to 27 (MGFTKILVTFFLVGLLVISSSPQNAIA) is a signal peptide. 4 cysteine pairs are disulfide-bonded: Cys39/Cys79, Cys43/Cys66, Cys52/Cys77, and Cys56/Cys78.

It belongs to the DEFL family.

It is found in the secreted. The polypeptide is Defensin-like protein 51 (LCR48) (Arabidopsis thaliana (Mouse-ear cress)).